The following is a 1136-amino-acid chain: Probable LRR receptor-like serine/threonine-protein kinase At4g36180 (1136 aa).

A signal peptide spans 1–22 (MAMDISLFFIFLVIYAPLVSYA). Topologically, residues 23 to 751 (DESQAEIDAL…TAEGKKKKRK (729 aa)) are extracellular. LRR repeat units lie at residues 93 to 115 (MLRK…LAYC), 117 to 139 (RLLS…MRNL), 141 to 162 (SLEV…GLPS), 163 to 186 (SLQF…ANLT), 187 to 210 (QLQL…GNLQ), 211 to 233 (SLQY…ISNC), 235 to 256 (SLVH…AYGA), and 259 to 280 (KLEV…SLFC). N-linked (GlcNAc...) asparagine glycans are attached at residues asparagine 105 and asparagine 138. N-linked (GlcNAc...) asparagine glycans are attached at residues asparagine 184, asparagine 192, and asparagine 232. 2 N-linked (GlcNAc...) asparagine glycosylation sites follow: asparagine 269 and asparagine 281. LRR repeat units follow at residues 283–304 (SLTI…ETTA), 309–330 (GLQV…WLTN), 333–355 (SLKN…IGNL), 357–379 (RLEE…IKQC), 381–403 (SLDV…LGYM), 405–426 (ALKV…SMVN), 429–452 (QLER…MALT), 453–479 (SLSE…SNLS), 480–500 (FLNL…GNLF), 501–524 (KLTA…SGLP), 525–546 (NVQV…GFSS), 549–571 (SLRY…FGFL), 573–595 (LLVS…IGNC), 597–620 (ALEV…SRLP), 621–643 (RLKV…ISQS), 645–666 (SLNS…SFSG), 669–691 (NLTK…LALI), and 694–716 (NLVY…LGSR). N-linked (GlcNAc...) asparagine glycosylation is present at asparagine 365. N-linked (GlcNAc...) asparagine glycosylation is found at asparagine 441, asparagine 474, asparagine 477, asparagine 482, asparagine 511, asparagine 535, asparagine 554, and asparagine 594. An N-linked (GlcNAc...) asparagine glycan is attached at asparagine 631. 4 N-linked (GlcNAc...) asparagine glycosylation sites follow: asparagine 669, asparagine 679, asparagine 699, and asparagine 719. The helical transmembrane segment at 752–772 (MILMIVMAAIGAFLLSLFCCF) threads the bilayer. The Cytoplasmic portion of the chain corresponds to 773–1136 (YVYTLLKWRK…ADPTSQPSPA (364 aa)). Residues 786–819 (QQSTTGEKKRSPGRTSAGSRVRSSTSRSSTENGE) form a disordered region. The segment covering 799–815 (RTSAGSRVRSSTSRSST) has biased composition (low complexity). Threonine 830 and threonine 838 each carry phosphothreonine. The Protein kinase domain occupies 841–1123 (FDEENVLSRT…LEGCRVGPDV (283 aa)). Phosphotyrosine occurs at positions 915 and 1010.

The protein belongs to the protein kinase superfamily. Ser/Thr protein kinase family.

It is found in the cell membrane. It carries out the reaction L-seryl-[protein] + ATP = O-phospho-L-seryl-[protein] + ADP + H(+). The enzyme catalyses L-threonyl-[protein] + ATP = O-phospho-L-threonyl-[protein] + ADP + H(+). The sequence is that of Probable LRR receptor-like serine/threonine-protein kinase At4g36180 from Arabidopsis thaliana (Mouse-ear cress).